A 325-amino-acid polypeptide reads, in one-letter code: tRNA N6-adenosine threonylcarbamoyltransferase (325 aa).

Residues His111 and His115 each coordinate Fe cation. Substrate-binding positions include 134–138 (LISGG), Asp167, Gly180, and Asn277. Residue Asp305 coordinates Fe cation.

This sequence belongs to the KAE1 / TsaD family. Fe(2+) serves as cofactor.

Its subcellular location is the cytoplasm. It is found in the secreted. It catalyses the reaction L-threonylcarbamoyladenylate + adenosine(37) in tRNA = N(6)-L-threonylcarbamoyladenosine(37) in tRNA + AMP + H(+). Its function is as follows. Required for the formation of a threonylcarbamoyl group on adenosine at position 37 (t(6)A37) in tRNAs that read codons beginning with adenine. Is involved in the transfer of the threonylcarbamoyl moiety of threonylcarbamoyl-AMP (TC-AMP) to the N6 group of A37, together with TsaE and TsaB. TsaD likely plays a direct catalytic role in this reaction. In Mannheimia haemolytica (Pasteurella haemolytica), this protein is tRNA N6-adenosine threonylcarbamoyltransferase.